We begin with the raw amino-acid sequence, 298 residues long: Homoserine kinase (298 aa).

An ATP-binding site is contributed by 83 to 93 (PVSRGLGSSST).

It belongs to the GHMP kinase family. Homoserine kinase subfamily.

The protein resides in the cytoplasm. It carries out the reaction L-homoserine + ATP = O-phospho-L-homoserine + ADP + H(+). It functions in the pathway amino-acid biosynthesis; L-threonine biosynthesis; L-threonine from L-aspartate: step 4/5. Functionally, catalyzes the ATP-dependent phosphorylation of L-homoserine to L-homoserine phosphate. This chain is Homoserine kinase, found in Clostridium beijerinckii (strain ATCC 51743 / NCIMB 8052) (Clostridium acetobutylicum).